The sequence spans 347 residues: Eukaryotic translation initiation factor 3 subunit I (347 aa).

5 WD repeats span residues 8 to 47 (GHER…RLGT), 50 to 89 (DHSG…AVHS), 150 to 190 (EQAT…VQAK), 192 to 233 (IHEK…KTYK), and 289 to 328 (GHFG…FDFK).

It belongs to the eIF-3 subunit I family. As to quaternary structure, component of the eukaryotic translation initiation factor 3 (eIF-3) complex.

The protein localises to the cytoplasm. In terms of biological role, component of the eukaryotic translation initiation factor 3 (eIF-3) complex, which is involved in protein synthesis of a specialized repertoire of mRNAs and, together with other initiation factors, stimulates binding of mRNA and methionyl-tRNAi to the 40S ribosome. The eIF-3 complex specifically targets and initiates translation of a subset of mRNAs involved in cell proliferation. This chain is Eukaryotic translation initiation factor 3 subunit I, found in Kluyveromyces lactis (strain ATCC 8585 / CBS 2359 / DSM 70799 / NBRC 1267 / NRRL Y-1140 / WM37) (Yeast).